The chain runs to 431 residues: Adenylosuccinate synthetase (431 aa).

GTP-binding positions include 13 to 19 and 41 to 43; these read GDEGKGK and GHT. The Proton acceptor role is filled by Asp-14. The Mg(2+) site is built by Asp-14 and Gly-41. IMP-binding positions include 14 to 17, 39 to 42, Thr-130, Arg-144, Gln-225, Thr-240, and Arg-304; these read DEGK and NAGH. Residue His-42 is the Proton donor of the active site. Residue 300-306 coordinates substrate; the sequence is ATTGRKR. GTP contacts are provided by residues Arg-306, 332-334, and 415-417; these read KLD and STG.

Belongs to the adenylosuccinate synthetase family. Homodimer. It depends on Mg(2+) as a cofactor.

Its subcellular location is the cytoplasm. It carries out the reaction IMP + L-aspartate + GTP = N(6)-(1,2-dicarboxyethyl)-AMP + GDP + phosphate + 2 H(+). The protein operates within purine metabolism; AMP biosynthesis via de novo pathway; AMP from IMP: step 1/2. Its function is as follows. Plays an important role in the de novo pathway of purine nucleotide biosynthesis. Catalyzes the first committed step in the biosynthesis of AMP from IMP. In Shewanella amazonensis (strain ATCC BAA-1098 / SB2B), this protein is Adenylosuccinate synthetase.